The chain runs to 378 residues: Mitogen-activated protein kinase mpkC (378 aa).

A Protein kinase domain is found at 20–300 (YVNPQPIGMG…AQDALRYPYL (281 aa)). ATP contacts are provided by residues 26-34 (IGMGSFGLV) and lysine 49. The Proton acceptor role is filled by aspartate 141. At threonine 171 the chain carries Phosphothreonine. Positions 171 to 173 (TGY) match the TXY motif. Tyrosine 173 carries the post-translational modification Phosphotyrosine.

Belongs to the protein kinase superfamily. Ser/Thr protein kinase family. MAP kinase subfamily. HOG1 sub-subfamily. In terms of assembly, interacts with sakA upon osmotic and cell wall stresses. It depends on Mg(2+) as a cofactor. Dually phosphorylated on Thr-171 and Tyr-173, which activates the enzyme.

The protein localises to the cytoplasm. The protein resides in the nucleus. The catalysed reaction is L-seryl-[protein] + ATP = O-phospho-L-seryl-[protein] + ADP + H(+). It carries out the reaction L-threonyl-[protein] + ATP = O-phospho-L-threonyl-[protein] + ADP + H(+). Its activity is regulated as follows. Activated by tyrosine and threonine phosphorylation. Functionally, mitogen-activated protein kinase; part of an osmotic and general signal pathways involved in regulation of the response to the cell wall damage, oxidative stress, drug resistance, and establishment of infection. Required for growth on media where sorbitol or mannitol is the sole carbon source. With sakA, plays a redundant or cooperative role in the conidial stress resistance. Also plays a supportive role in osmotic stress adaptation when sakA is deficient. Involved in paradoxical growth, the cell wall integrity (CWI) pathway and biofilm formation. Acts by modulating sakA activity upon exposure to several types o stresses and during cell wall biosynthesis. Also collaborates with sakA to allow ful virulence in a neutropenic murine model of invasive pulmonary aspergillosis. MpkC and sakA have both independent and collaborative functions during the transcriptional response to transient osmotic stress, and mpkC plays a major role in the modulation of the response to DNA metabolism while activating mitochondrial functions and cation transport. In Aspergillus fumigatus (strain ATCC MYA-4609 / CBS 101355 / FGSC A1100 / Af293) (Neosartorya fumigata), this protein is Mitogen-activated protein kinase mpkC (mpkC).